The sequence spans 211 residues: MAEQHSTPEQAAAGKSHGGLGGSYKVIVYEMENFQGKRCELTAECPNLTESLLEKVGSIQVESGPWLAFERRAFRGEQYVLEKGDYPRWDAWSNSHHSDSLLSLRPLHIDGPDHKLHLFENPAFGGRKMEIVDDDVPSLWAHGFQDRVASVRAINGTWVGYEFPGYRGRQYVFERGEYRHWNEWDANQPQLQSVRRIRDQKWHKRGVFLSS.

M1 is subject to N-acetylmethionine. A2 bears the N-acetylalanine; in Beta-crystallin B3, N-terminally processed mark. The segment at 2–23 (AEQHSTPEQAAAGKSHGGLGGS) is N-terminal arm. 2 Beta/gamma crystallin 'Greek key' domains span residues 24–63 (YKVI…QVES) and 64–108 (GPWL…RPLH). Positions 109-113 (IDGPD) are connecting peptide. Beta/gamma crystallin 'Greek key' domains are found at residues 114 to 155 (HKLH…RAIN) and 156 to 198 (GTWV…RRIR). Residues 200-211 (QKWHKRGVFLSS) are C-terminal arm.

This sequence belongs to the beta/gamma-crystallin family. In terms of assembly, homo/heterodimer, or complexes of higher-order. The structure of beta-crystallin oligomers seems to be stabilized through interactions between the N-terminal arms.

Functionally, crystallins are the dominant structural components of the vertebrate eye lens. This is Beta-crystallin B3 (CRYBB3) from Bos taurus (Bovine).